A 382-amino-acid polypeptide reads, in one-letter code: O-antigen polymerase (382 aa).

Residues 1–3 lie on the Cytoplasmic side of the membrane; that stretch reads MNN. Residues 4–22 traverse the membrane as a helical segment; that stretch reads INKIFITFLCIELIIGGGG. Residues 23-34 lie on the Periplasmic side of the membrane; sequence RLLEPLGIFPLR. A helical membrane pass occupies residues 35–54; it reads YLLFVFSFILLIFNLVTFNF. Over 55–62 the chain is Cytoplasmic; that stretch reads SITQKCVS. A helical membrane pass occupies residues 63–81; sequence LFIWLLLFPFYGFFVGLLA. Over 82 to 94 the chain is Periplasmic; the sequence is GNKINDILFDVQP. A helical membrane pass occupies residues 95–112; it reads YLFMLSLIYLFTLRYTLK. Over 113–125 the chain is Cytoplasmic; that stretch reads VFSCEIFIKIVNA. The helical transmembrane segment at 126 to 146 threads the bilayer; it reads FALYGSLLYISYIILLNFGLL. The Periplasmic segment spans residues 147–167; sequence NFNLIYEHLSLTSEFFFRPDG. Residues 168-187 form a helical membrane-spanning segment; it reads AFFSKSFYFFGVGAIISFVD. Residues 188–189 are Cytoplasmic-facing; it reads KK. A helical membrane pass occupies residues 190–206; that stretch reads YLKCLIIVLAILLTESR. The Periplasmic portion of the chain corresponds to 207–208; that stretch reads GV. The helical transmembrane segment at 209–226 threads the bilayer; the sequence is LLFTTLSLLLASFKLHKL. Over 227-229 the chain is Cytoplasmic; the sequence is YLN. A helical transmembrane segment spans residues 230-247; that stretch reads TIIIILGSVLFIIMLYMV. Residues 248-300 lie on the Periplasmic side of the membrane; that stretch reads GSRSEDSDSVRFNDLYFYYKNVDLATFLFGRGFGSFILDRLRIEIVPLEILQK. The chain crosses the membrane as a helical span at residues 301–318; the sequence is TGVIGVFISLVPMLLIFL. At 319–329 the chain is on the cytoplasmic side; the sequence is KGYFLNSTKTS. A helical transmembrane segment spans residues 330–349; the sequence is LMMSLILFFSITVSITNPFL. Topologically, residues 350 to 352 are periplasmic; that stretch reads FTP. Residues 353–370 form a helical membrane-spanning segment; that stretch reads MGIFIIGVVVLWVFSIEN. Residues 371–382 are Cytoplasmic-facing; it reads IQISNNLTSGAK.

Its subcellular location is the cell inner membrane. The enzyme catalyses n lipid-linked O-antigen repeat units = a lipid-linked O antigen + (n-1) polyisoprenyl diphosphate.. It functions in the pathway bacterial outer membrane biogenesis; LPS O-antigen biosynthesis. Functionally, polymerase involved in the biosynthesis of the lipopolysaccharide (LPS). Catalyzes the polymerization of the O-antigen repeat units on the periplasmic face of the inner membrane, leading to the formation of the lipid-linked O-antigen molecule. The chain is O-antigen polymerase from Shigella flexneri.